A 1189-amino-acid chain; its full sequence is Pumilio homolog 1 (1189 aa).

Disordered stretches follow at residues 24-65 (QHAQ…SSPV), 233-288 (SCLR…QNGI), 491-525 (QQTTQQTQQGQQQVLRGGASQRPLTPNQNQQGQQT), 614-652 (AGTTNGPFRPLGTQQPQPQPQQQPTNNLASSSFYGNNSL), and 743-774 (GPVGMPLPSQGPGHSQTPPPSLSSHGSSSSLN). The span at 45-58 (QAQPQPAANQALAA) shows a compositional bias: low complexity. Basic and acidic residues predominate over residues 250–277 (NDKGDKKNKGTFDGDKLGDLKEEGDVMD). Residues 491–503 (QQTTQQTQQGQQQ) are compositionally biased toward low complexity. A compositionally biased stretch (polar residues) spans 512–525 (RPLTPNQNQQGQQT). Low complexity-rich tracts occupy residues 627–652 (QQPQPQPQQQPTNNLASSSFYGNNSL) and 764–774 (LSSHGSSSSLN). The PUM-HD domain occupies 829-1171 (GRSRLLEDFR…HILAKLEKYY (343 aa)). Pumilio repeat units lie at residues 849-884 (EIAGHIMEFSQDQHGSRFIQLKLERATPAERQLVFN), 885-920 (EILQAAYQLMVDVFGNYVIQKFFEFGSLEQKLALAE), 921-958 (RIRGHVLSLALQMYGCRVIQKALEFIPPDQQVINEMVR), 959-994 (ELDGHVLKCVKDQNGNHVVQKCIECVQPQSLQFIID), 995-1030 (AFKGQVFALSTHPYGCRVIQRILEHCLPEQTLPILE), 1031-1066 (ELHQHTEQLVQDQYGNYVIQHVLEHGRPEDKSKIVA), 1067-1102 (EIRGNVLVLSQHKFASNVVEKCVTHASRTERAMLID), and 1106-1145 (TMNDGPHSALYTMMKDQYANYVVQKMIDVAEPAQRKIVMH). The adenine-nucleotide binding in RNA target stretch occupies residues 864–868 (SRFIQ). The tract at residues 900–904 (NYVIQ) is uracil-nucleotide binding in RNA target. The adenine-nucleotide binding in RNA target stretch occupies residues 936-940 (CRVIQ). Residues 974 to 978 (NHVVQ) are non-specific-nucleotide binding in RNA target. Residues 1010–1014 (CRVIQ) form an adenine-nucleotide binding in RNA target region. The tract at residues 1046–1050 (NYVIQ) is uracil-nucleotide binding in RNA target. Guanine-nucleotide binding in RNA target regions lie at residues 1082 to 1086 (SNVVE) and 1083 to 1086 (NVVE). The interval 1125–1129 (NYVVQ) is uracil-nucleotide binding in RNA target.

In terms of tissue distribution, detected in embryonic male and female gonads, heart, liver and muscle. Detected in adult brain, testis, ovary, heart, lung, spleen, kidney and muscle.

It is found in the cytoplasm. The protein resides in the P-body. It localises to the cytoplasmic granule. Sequence-specific RNA-binding protein that acts as a post-transcriptional repressor by binding the 3'-UTR of mRNA targets. Binds to an RNA consensus sequence, the Pumilio Response Element (PRE), 5'-UGUANAUA-3', that is related to the Nanos Response Element (NRE). Mediates post-transcriptional repression of transcripts via different mechanisms: acts via direct recruitment of the CCR4-POP2-NOT deadenylase leading to translational inhibition and mRNA degradation. Also mediates deadenylation-independent repression by promoting accessibility of miRNAs. The polypeptide is Pumilio homolog 1 (PUM1) (Gallus gallus (Chicken)).